We begin with the raw amino-acid sequence, 699 residues long: UvrABC system protein B (699 aa).

The 154-residue stretch at E35–M188 folds into the Helicase ATP-binding domain. Residue G48–S55 coordinates ATP. Residues Y101–I124 carry the Beta-hairpin motif. The 167-residue stretch at Q438–T604 folds into the Helicase C-terminal domain. The region spanning V654–E689 is the UVR domain.

This sequence belongs to the UvrB family. Forms a heterotetramer with UvrA during the search for lesions. Interacts with UvrC in an incision complex.

The protein resides in the cytoplasm. In terms of biological role, the UvrABC repair system catalyzes the recognition and processing of DNA lesions. A damage recognition complex composed of 2 UvrA and 2 UvrB subunits scans DNA for abnormalities. Upon binding of the UvrA(2)B(2) complex to a putative damaged site, the DNA wraps around one UvrB monomer. DNA wrap is dependent on ATP binding by UvrB and probably causes local melting of the DNA helix, facilitating insertion of UvrB beta-hairpin between the DNA strands. Then UvrB probes one DNA strand for the presence of a lesion. If a lesion is found the UvrA subunits dissociate and the UvrB-DNA preincision complex is formed. This complex is subsequently bound by UvrC and the second UvrB is released. If no lesion is found, the DNA wraps around the other UvrB subunit that will check the other stand for damage. The polypeptide is UvrABC system protein B (Paenarthrobacter aurescens (strain TC1)).